Here is a 311-residue protein sequence, read N- to C-terminus: ATP synthase subunit gamma, mitochondrial (311 aa).

A mitochondrion-targeting transit peptide spans 1–33; it reads MLSRIVSNNATRSVMCHQAQVGILYKTNPVRTY.

It belongs to the ATPase gamma chain family. As to quaternary structure, F-type ATPases have 2 components, CF(1) - the catalytic core - and CF(0) - the membrane proton channel. CF(1) has five subunits: alpha(3), beta(3), gamma(1), delta(1), epsilon(1). CF(0) has three main subunits: a, b and c.

Its subcellular location is the mitochondrion. The protein resides in the mitochondrion inner membrane. Functionally, mitochondrial membrane ATP synthase (F(1)F(0) ATP synthase or Complex V) produces ATP from ADP in the presence of a proton gradient across the membrane which is generated by electron transport complexes of the respiratory chain. F-type ATPases consist of two structural domains, F(1) - containing the extramembraneous catalytic core, and F(0) - containing the membrane proton channel, linked together by a central stalk and a peripheral stalk. During catalysis, ATP synthesis in the catalytic domain of F(1) is coupled via a rotary mechanism of the central stalk subunits to proton translocation. Part of the complex F(1) domain and the central stalk which is part of the complex rotary element. The gamma subunit protrudes into the catalytic domain formed of alpha(3)beta(3). Rotation of the central stalk against the surrounding alpha(3)beta(3) subunits leads to hydrolysis of ATP in three separate catalytic sites on the beta subunits. This chain is ATP synthase subunit gamma, mitochondrial (ATP3), found in Saccharomyces cerevisiae (strain ATCC 204508 / S288c) (Baker's yeast).